A 232-amino-acid chain; its full sequence is Large ribosomal subunit protein uL1 (232 aa).

It belongs to the universal ribosomal protein uL1 family. As to quaternary structure, part of the 50S ribosomal subunit.

Binds directly to 23S rRNA. The L1 stalk is quite mobile in the ribosome, and is involved in E site tRNA release. Its function is as follows. Protein L1 is also a translational repressor protein, it controls the translation of the L11 operon by binding to its mRNA. The polypeptide is Large ribosomal subunit protein uL1 (Mesorhizobium japonicum (strain LMG 29417 / CECT 9101 / MAFF 303099) (Mesorhizobium loti (strain MAFF 303099))).